We begin with the raw amino-acid sequence, 479 residues long: Sulfate adenylyltransferase subunit 1 (479 aa).

The 215-residue stretch at 25 to 239 (KSLLRFLTCG…EVLETVDIQR (215 aa)) folds into the tr-type G domain. The tract at residues 34 to 41 (GSVDDGKS) is G1. 34 to 41 (GSVDDGKS) lines the GTP pocket. The G2 stretch occupies residues 92–96 (GITID). The G3 stretch occupies residues 113–116 (DTPG). Residues 113 to 117 (DTPGH) and 168 to 171 (NKMD) contribute to the GTP site. Residues 168–171 (NKMD) form a G4 region. Residues 206–208 (SAL) form a G5 region.

It belongs to the TRAFAC class translation factor GTPase superfamily. Classic translation factor GTPase family. CysN/NodQ subfamily. In terms of assembly, heterodimer composed of CysD, the smaller subunit, and CysN.

The catalysed reaction is sulfate + ATP + H(+) = adenosine 5'-phosphosulfate + diphosphate. The protein operates within sulfur metabolism; hydrogen sulfide biosynthesis; sulfite from sulfate: step 1/3. Functionally, with CysD forms the ATP sulfurylase (ATPS) that catalyzes the adenylation of sulfate producing adenosine 5'-phosphosulfate (APS) and diphosphate, the first enzymatic step in sulfur assimilation pathway. APS synthesis involves the formation of a high-energy phosphoric-sulfuric acid anhydride bond driven by GTP hydrolysis by CysN coupled to ATP hydrolysis by CysD. This Salmonella heidelberg (strain SL476) protein is Sulfate adenylyltransferase subunit 1.